The chain runs to 199 residues: Probable adenylyl-sulfate kinase (199 aa).

Residue 34–41 participates in ATP binding; that stretch reads GLSGSGKS. S108 acts as the Phosphoserine intermediate in catalysis.

The protein belongs to the APS kinase family.

It carries out the reaction adenosine 5'-phosphosulfate + ATP = 3'-phosphoadenylyl sulfate + ADP + H(+). It functions in the pathway sulfur metabolism; hydrogen sulfide biosynthesis; sulfite from sulfate: step 2/3. In terms of biological role, catalyzes the synthesis of activated sulfate. This is Probable adenylyl-sulfate kinase (yisZ) from Bacillus subtilis (strain 168).